Reading from the N-terminus, the 1179-residue chain is DNA-directed RNA polymerase subunit beta' (1179 aa).

4 residues coordinate Zn(2+): Cys60, Cys62, Cys75, and Cys78. Mg(2+) is bound by residues Asp450, Asp452, and Asp454. Positions 791, 865, 872, and 875 each coordinate Zn(2+).

This sequence belongs to the RNA polymerase beta' chain family. The RNAP catalytic core consists of 2 alpha, 1 beta, 1 beta' and 1 omega subunit. When a sigma factor is associated with the core the holoenzyme is formed, which can initiate transcription. Mg(2+) serves as cofactor. Requires Zn(2+) as cofactor.

It catalyses the reaction RNA(n) + a ribonucleoside 5'-triphosphate = RNA(n+1) + diphosphate. In terms of biological role, DNA-dependent RNA polymerase catalyzes the transcription of DNA into RNA using the four ribonucleoside triphosphates as substrates. This Alkaliphilus oremlandii (strain OhILAs) (Clostridium oremlandii (strain OhILAs)) protein is DNA-directed RNA polymerase subunit beta'.